Consider the following 141-residue polypeptide: Nucleoside diphosphate kinase (141 aa).

ATP contacts are provided by Lys-10, Phe-58, Arg-86, Thr-92, Arg-103, and Asn-113. Residue His-116 is the Pros-phosphohistidine intermediate of the active site.

Belongs to the NDK family. As to quaternary structure, homotetramer. The cofactor is Mg(2+).

The protein resides in the cytoplasm. The enzyme catalyses a 2'-deoxyribonucleoside 5'-diphosphate + ATP = a 2'-deoxyribonucleoside 5'-triphosphate + ADP. The catalysed reaction is a ribonucleoside 5'-diphosphate + ATP = a ribonucleoside 5'-triphosphate + ADP. Functionally, major role in the synthesis of nucleoside triphosphates other than ATP. The ATP gamma phosphate is transferred to the NDP beta phosphate via a ping-pong mechanism, using a phosphorylated active-site intermediate. The protein is Nucleoside diphosphate kinase of Ehrlichia canis (strain Jake).